The primary structure comprises 488 residues: Histone deacetylase 2 (488 aa).

The segment at 9–322 (KKKVCYYYDG…WTYETAVALD (314 aa)) is histone deacetylase. G28 and K32 together coordinate 1D-myo-inositol 1,4,5,6-tetrakisphosphate. H142 is a catalytic residue. 3 residues coordinate Zn(2+): D177, H179, and D265. R271 serves as a coordination point for 1D-myo-inositol 1,4,5,6-tetrakisphosphate. Positions 389-488 (AVHEDSGDED…GAKSEQLSNP (100 aa)) are disordered. Positions 402-417 (PDKRISIRASDKRIAC) are enriched in basic and acidic residues. A compositionally biased stretch (acidic residues) spans 418–428 (DEEFSDSEDEG). A compositionally biased stretch (basic and acidic residues) spans 429 to 481 (EGGRRNVADHKKGAKKARIEEDKKETEDKKADVKEEDKSKDNSGEKTDTKGAK).

The protein belongs to the histone deacetylase family. HD type 1 subfamily. Zn(2+) is required as a cofactor.

Its subcellular location is the nucleus. The protein localises to the cytoplasm. It carries out the reaction N(6)-acetyl-L-lysyl-[histone] + H2O = L-lysyl-[histone] + acetate. It catalyses the reaction N(6)-acetyl-L-lysyl-[protein] + H2O = L-lysyl-[protein] + acetate. The catalysed reaction is N(6)-(2E)-butenoyl-L-lysyl-[protein] + H2O = (2E)-2-butenoate + L-lysyl-[protein]. The enzyme catalyses N(6)-(2-hydroxyisobutanoyl)-L-lysyl-[protein] + H2O = 2-hydroxy-2-methylpropanoate + L-lysyl-[protein]. It carries out the reaction N(6)-[(S)-lactoyl]-L-lysyl-[protein] + H2O = (S)-lactate + L-lysyl-[protein]. Inositol tetraphosphate (1D-myo-inositol 1,4,5,6-tetrakisphosphate) may act as an intermolecular glue between HDAC2 and N-Cor repressor complex components. In terms of biological role, histone deacetylase that catalyzes the deacetylation of lysine residues on the N-terminal part of the core histones (H2A, H2B, H3 and H4). Histone deacetylation gives a tag for epigenetic repression and plays an important role in transcriptional regulation, cell cycle progression and developmental events. Histone deacetylases act via the formation of large multiprotein complexes. Also deacetylates non-histone proteins. In addition to protein deacetylase activity, also acts as a protein-lysine deacylase by recognizing other acyl groups: catalyzes removal of (2E)-butenoyl (crotonyl), lactoyl (lactyl) and 2-hydroxyisobutanoyl (2-hydroxyisobutyryl) acyl groups from lysine residues, leading to protein decrotonylation, delactylation and de-2-hydroxyisobutyrylation, respectively. This Gallus gallus (Chicken) protein is Histone deacetylase 2 (HDAC2).